The sequence spans 114 residues: Snake venom vascular endothelial growth factor (114 aa).

At glutamine 1 the chain carries Pyrrolidone carboxylic acid. Intrachain disulfides connect cysteine 14/cysteine 56, cysteine 45/cysteine 91, and cysteine 49/cysteine 93. Positions 92-114 are disordered; that stretch reads ECRPGSTVNNGKRKKNPKEGEPR.

This sequence belongs to the PDGF/VEGF growth factor family. Snake venom VEGF subfamily. Homodimer; disulfide-linked. Interacts with human VEGF receptor 1/FLT1. Interacts with human VEGF receptor 2/KDR. Expressed by venom gland.

It localises to the secreted. Its function is as follows. Snake venom vascular endothelial growth factor (svVEGF) that may contribute to venom dispersion and prey subjugation by inducing vascular permeability and hypotension. Induces an increase in capillary permeability after intradermal injection, as well as a drastic hypotensive effect after intravenous injection. The hypotension is mediated by nitric oxide (NO), which is produced by VEGF-activated endothelium NO synthase. Induces angiogenesis and migration of human vascular endothelial cells in vitro. Exhibits angiogenic activity by inducing human umbilical vein endothelial cells (HUVEC) to develop vessels in vitro. Induces cellular migration of HUVEC cells towards a wound in scratch assays, enhancing wound closure after 12 h by 49.5%. Induces dose-dependent leukocyte recruitment to the peritoneal cavity leading to increased vascular permeability in mice. The sequence is that of Snake venom vascular endothelial growth factor from Crotalus durissus terrificus (South American rattlesnake).